The chain runs to 869 residues: Kinesin-like protein KIN-10A (869 aa).

The span at 1-36 shows a compositional bias: polar residues; that stretch reads MAPTPSSSRSNQTQYTLIRTPQTKQRLNFHSKTPNP. Residues 1 to 50 are disordered; sequence MAPTPSSSRSNQTQYTLIRTPQTKQRLNFHSKTPNPDGSKDPSPPEHPVE. The segment covering 38–50 has biased composition (basic and acidic residues); that stretch reads GSKDPSPPEHPVE. Residues 48 to 367 form the Kinesin motor domain; it reads PVEVIGRIRD…LEYGAKAKCI (320 aa). ATP is bound at residue 129–136; it reads GPTGAGKS. Residues 393-515 are a coiled coil; sequence RIAAMDEFII…EIEVEFRRSN (123 aa).

Belongs to the TRAFAC class myosin-kinesin ATPase superfamily. Kinesin family. KIN-10 subfamily. As to quaternary structure, binds microtubules.

The protein resides in the cytoplasm. It is found in the cytoskeleton. It localises to the phragmoplast. Probable plus end-directed motor protein that may contribute to the transport of Golgi-derived vesicles in the phragmoplast. The chain is Kinesin-like protein KIN-10A from Arabidopsis thaliana (Mouse-ear cress).